We begin with the raw amino-acid sequence, 556 residues long: Formate--tetrahydrofolate ligase (556 aa).

65 to 72 lines the ATP pocket; it reads TPAGEGKT.

Belongs to the formate--tetrahydrofolate ligase family.

The enzyme catalyses (6S)-5,6,7,8-tetrahydrofolate + formate + ATP = (6R)-10-formyltetrahydrofolate + ADP + phosphate. The protein operates within one-carbon metabolism; tetrahydrofolate interconversion. This chain is Formate--tetrahydrofolate ligase, found in Proteus mirabilis (strain HI4320).